Reading from the N-terminus, the 473-residue chain is MNLQGRTVLVLGLGETGLSMAKWLFRRGALVRAADTRNEPPAMRAFNSLLPQAEVFTGSLAGRAFYGVDLIAISPGLPLSEPLVQQALKEGIPVVGDMELFACAVGGTGGGMPKLVGITGSNGKTTVTAMTGAMLKKAGWDVEVAGNIGPAVLDALMRREDTGKMPQAWVLELSSFQLETTKSLGLDAAAVLNVSEDHLDRYAGMQEYAAAKARIFLGDSEGVQILNGDDPVVRQMTLAGRPHVTFSLATPQSADDFGLLREGGDTWLMQGDTRLMDARELAITGRHNCANALAALALCRALAVPFEPLLQALREFRGLPHRVEKVAAFSGITFYDDSKGTNVGATVAALKGLGQPVVLIAGGDGKAQNFSPLAAPIGEHGRAVVLIGRDAEKIAVAINECGVPLHRAQTMEEAVRKSFQLAREGDAVLMSPACASFDMFDNYVHRAEAFVAAVRSMQAARAGGNSAGVAGRH.

Position 120–126 (120–126 (GSNGKTT)) interacts with ATP.

This sequence belongs to the MurCDEF family.

The protein localises to the cytoplasm. It carries out the reaction UDP-N-acetyl-alpha-D-muramoyl-L-alanine + D-glutamate + ATP = UDP-N-acetyl-alpha-D-muramoyl-L-alanyl-D-glutamate + ADP + phosphate + H(+). Its pathway is cell wall biogenesis; peptidoglycan biosynthesis. Functionally, cell wall formation. Catalyzes the addition of glutamate to the nucleotide precursor UDP-N-acetylmuramoyl-L-alanine (UMA). The polypeptide is UDP-N-acetylmuramoylalanine--D-glutamate ligase (Nitrosospira multiformis (strain ATCC 25196 / NCIMB 11849 / C 71)).